The chain runs to 354 residues: F-box/kelch-repeat protein At1g80440 (354 aa).

The region spanning 2-49 is the F-box domain; it reads ELIPNLPDDVARECLLRSSYQQFPVIASVCRAWNREVSLSQFLHQRKA. 4 Kelch repeats span residues 63–110, 115–163, 166–213, and 215–263; these read RVDP…CRLV, DLIV…ASDS, TVLV…FHAG, and FHVI…PPTC.

The sequence is that of F-box/kelch-repeat protein At1g80440 from Arabidopsis thaliana (Mouse-ear cress).